The primary structure comprises 510 residues: ATP synthase subunit alpha (510 aa).

169 to 176 (GDRQTGKT) is an ATP binding site.

Belongs to the ATPase alpha/beta chains family. As to quaternary structure, F-type ATPases have 2 components, CF(1) - the catalytic core - and CF(0) - the membrane proton channel. CF(1) has five subunits: alpha(3), beta(3), gamma(1), delta(1), epsilon(1). CF(0) has three main subunits: a(1), b(2) and c(9-12). The alpha and beta chains form an alternating ring which encloses part of the gamma chain. CF(1) is attached to CF(0) by a central stalk formed by the gamma and epsilon chains, while a peripheral stalk is formed by the delta and b chains.

It localises to the cell inner membrane. The enzyme catalyses ATP + H2O + 4 H(+)(in) = ADP + phosphate + 5 H(+)(out). Functionally, produces ATP from ADP in the presence of a proton gradient across the membrane. The alpha chain is a regulatory subunit. In Methylobacterium radiotolerans (strain ATCC 27329 / DSM 1819 / JCM 2831 / NBRC 15690 / NCIMB 10815 / 0-1), this protein is ATP synthase subunit alpha.